Reading from the N-terminus, the 450-residue chain is Grayanic acid biosynthesis cluster O-methyltransferase (450 aa).

S-adenosyl-L-methionine is bound at residue aspartate 254. Histidine 301 serves as the catalytic Proton acceptor.

Belongs to the class I-like SAM-binding methyltransferase superfamily. Cation-independent O-methyltransferase family. COMT subfamily.

It participates in secondary metabolite biosynthesis. In terms of biological role, non-reducing polyketide synthase; part of the gene cluster that mediates the biosynthesis of orcinol depsidone grayanic acid (GRA), the only major secondary metabolite known in C.grayi. The first step consists in the ring and depside synthesis by PKS16 leading to 4-O-demethylsphaerophorin, involving different orcinol-like rings, one with acetyl CoA and the other with octanoyl CoA as the starter. Further depsidone formation by the GRA cluster-specific cytochrome P450 leads to 4-O-demethylgrayanic acid. Finally, the cluster specific O-methyltransferase probably converts the 4-O-demethylgrayanic acid into grayanic acid. This is Grayanic acid biosynthesis cluster O-methyltransferase from Cladonia grayi (Gray's cup lichen).